We begin with the raw amino-acid sequence, 359 residues long: Glycerol-3-phosphate dehydrogenase [NAD(P)+] (359 aa).

NADPH is bound by residues Thr11, Trp12, Arg32, and Lys107. Sn-glycerol 3-phosphate contacts are provided by Lys107 and Gly138. Position 142 (Ala142) interacts with NADPH. Residues Lys193, Asp246, Ser256, Arg257, and Asn258 each coordinate sn-glycerol 3-phosphate. Lys193 functions as the Proton acceptor in the catalytic mechanism. Residue Arg257 coordinates NADPH. Val281 and Glu283 together coordinate NADPH.

This sequence belongs to the NAD-dependent glycerol-3-phosphate dehydrogenase family.

Its subcellular location is the cytoplasm. The catalysed reaction is sn-glycerol 3-phosphate + NAD(+) = dihydroxyacetone phosphate + NADH + H(+). The enzyme catalyses sn-glycerol 3-phosphate + NADP(+) = dihydroxyacetone phosphate + NADPH + H(+). It participates in membrane lipid metabolism; glycerophospholipid metabolism. Its function is as follows. Catalyzes the reduction of the glycolytic intermediate dihydroxyacetone phosphate (DHAP) to sn-glycerol 3-phosphate (G3P), the key precursor for phospholipid synthesis. In Dehalococcoides mccartyi (strain ATCC BAA-2266 / KCTC 15142 / 195) (Dehalococcoides ethenogenes (strain 195)), this protein is Glycerol-3-phosphate dehydrogenase [NAD(P)+].